The primary structure comprises 211 residues: Ribonuclease T (211 aa).

The Exonuclease domain occupies 24-198 (VVVDVETGGF…YDAEKTAHLF (175 aa)). Positions 27, 29, 185, and 190 each coordinate Mg(2+). His-185 acts as the Proton donor/acceptor in catalysis.

This sequence belongs to the RNase T family. As to quaternary structure, homodimer. The cofactor is Mg(2+).

In terms of biological role, trims short 3' overhangs of a variety of RNA species, leaving a one or two nucleotide 3' overhang. Responsible for the end-turnover of tRNA: specifically removes the terminal AMP residue from uncharged tRNA (tRNA-C-C-A). Also appears to be involved in tRNA biosynthesis. This Xylella fastidiosa (strain 9a5c) protein is Ribonuclease T.